An 896-amino-acid polypeptide reads, in one-letter code: Valine--tRNA ligase (896 aa).

Positions 48–58 match the 'HIGH' region motif; it reads PNVTGSLHMGH. A 'KMSKS' region motif is present at residues 543–547; it reads KMSKS. Lys-546 contributes to the ATP binding site. Residues 830–896 adopt a coiled-coil conformation; sequence VIDLDAERTR…ARLGAALERL (67 aa).

This sequence belongs to the class-I aminoacyl-tRNA synthetase family. ValS type 1 subfamily. As to quaternary structure, monomer.

Its subcellular location is the cytoplasm. The catalysed reaction is tRNA(Val) + L-valine + ATP = L-valyl-tRNA(Val) + AMP + diphosphate. Its function is as follows. Catalyzes the attachment of valine to tRNA(Val). As ValRS can inadvertently accommodate and process structurally similar amino acids such as threonine, to avoid such errors, it has a 'posttransfer' editing activity that hydrolyzes mischarged Thr-tRNA(Val) in a tRNA-dependent manner. This Granulibacter bethesdensis (strain ATCC BAA-1260 / CGDNIH1) protein is Valine--tRNA ligase.